Consider the following 404-residue polypeptide: Mitochondrial potassium channel (404 aa).

Residues 1-30 (MTGRSRVLAMRHVGGVSPVLVRRDLFLTRT) constitute a mitochondrion transit peptide. Residues 31-196 (LCSHGPSQPR…KERTRAERTK (166 aa)) lie on the Mitochondrial matrix side of the membrane. A Phosphoserine modification is found at Ser65. Residues 111-138 (VREAREDLESQQTKLKEVRDRLDRISRD) adopt a coiled-coil conformation. A helical transmembrane segment spans residues 197 to 217 (NWSLIGSVLGALIGVAGSTYV). At 218 to 380 (NRVRLQELKA…LEAQVNRNTV (163 aa)) the chain is on the mitochondrial intermembrane side. Residues 381 to 401 (YGTLVTCATFVAVLPVLYMLF) traverse the membrane as a helical segment. At 402-404 (RAS) the chain is on the mitochondrial matrix side.

In terms of assembly, the mitochondrial potassium channel (mitoK(ATP)) forms a heteromultimer.

The protein resides in the mitochondrion inner membrane. It catalyses the reaction K(+)(in) = K(+)(out). Its activity is regulated as follows. Channel activity inhibited by ATP via ABCB8/MITOSUR subunit. Functionally, pore-forming subunit of the mitochondrial ATP-gated potassium channel (mitoK(ATP)). Together with ATP-binding subunit ABCB8/MITOSUR of the mitoK(ATP) channel, mediates ATP-dependent K(+) currents across the mitochondrial inner membrane. An increase in ATP intracellular levels closes the channel, inhibiting K(+) transport, whereas a decrease in ATP levels enhances K(+) uptake in the mitochondrial matrix. May contribute to the homeostatic control of cellular metabolism under stress conditions by regulating the mitochondrial matrix volume. This chain is Mitochondrial potassium channel, found in Bos taurus (Bovine).